A 200-amino-acid polypeptide reads, in one-letter code: TATA-box-binding protein (200 aa).

2 consecutive repeat copies span residues 25–101 and 115–192.

Belongs to the TBP family. As to quaternary structure, belongs to the TFIID complex together with the TBP-associated factors (TAFs). Binds DNA as monomer.

It localises to the nucleus. General transcription factor that functions at the core of the DNA-binding multiprotein factor TFIID. Binding of TFIID to the TATA box is the initial transcriptional step of the pre-initiation complex (PIC), playing a role in the activation of eukaryotic genes transcribed by RNA polymerase II. The sequence is that of TATA-box-binding protein from Mesembryanthemum crystallinum (Common ice plant).